Consider the following 678-residue polypeptide: THO complex subunit 5 homolog B (678 aa).

2 disordered regions span residues methionine 1 to glutamate 37 and alanine 294 to aspartate 329. The Nuclear localization signal signature appears at lysine 7–lysine 10. Over residues asparagine 14–glutamate 37 the composition is skewed to basic and acidic residues. Residues aspartate 301 to glutamate 314 are compositionally biased toward acidic residues.

Belongs to the THOC5 family. In terms of assembly, component of the THO subcomplex, which is composed of thoc1, thoc2, thoc3, thoc5, thoc6 and thoc7. Component of the transcription/export (TREX) complex at least composed of alyref/thoc4, ddx39b, sarnp/cip29, chtop and the THO subcomplex. Interacts with thoc7.

The protein localises to the nucleus. It localises to the nucleus speckle. The protein resides in the cytoplasm. Component of the THO subcomplex of the TREX complex which is thought to couple mRNA transcription, processing and nuclear export, and which specifically associates with spliced mRNA and not with unspliced pre-mRNA. Plays a key structural role in the oligomerization of the THO-ddx39b complex. TREX is recruited to spliced mRNAs by a transcription-independent mechanism, binds to mRNA upstream of the exon-junction complex (EJC) and is recruited in a splicing- and cap-dependent manner to a region near the 5' end of the mRNA where it functions in mRNA export to the cytoplasm via the TAP/NXF1 pathway. May be involved in cell differentiation. The chain is THO complex subunit 5 homolog B (thoc5-b) from Xenopus laevis (African clawed frog).